The following is a 175-amino-acid chain: ATP synthase subunit b 2 (175 aa).

The helical transmembrane segment at 20–40 (LIFWTAVTFVIVLLILKKFAW) threads the bilayer.

It belongs to the ATPase B chain family. In terms of assembly, F-type ATPases have 2 components, F(1) - the catalytic core - and F(0) - the membrane proton channel. F(1) has five subunits: alpha(3), beta(3), gamma(1), delta(1), epsilon(1). F(0) has four main subunits: a(1), b(2) and c(10-14). The alpha and beta chains form an alternating ring which encloses part of the gamma chain. F(1) is attached to F(0) by a central stalk formed by the gamma and epsilon chains, while a peripheral stalk is formed by the delta and b chains.

Its subcellular location is the cell inner membrane. Its function is as follows. F(1)F(0) ATP synthase produces ATP from ADP in the presence of a proton or sodium gradient. F-type ATPases consist of two structural domains, F(1) containing the extramembraneous catalytic core and F(0) containing the membrane proton channel, linked together by a central stalk and a peripheral stalk. During catalysis, ATP synthesis in the catalytic domain of F(1) is coupled via a rotary mechanism of the central stalk subunits to proton translocation. In terms of biological role, component of the F(0) channel, it forms part of the peripheral stalk, linking F(1) to F(0). The sequence is that of ATP synthase subunit b 2 from Prosthecochloris aestuarii (strain DSM 271 / SK 413).